The sequence spans 202 residues: Translation initiation factor IF-3 (202 aa).

Belongs to the IF-3 family. As to quaternary structure, monomer.

The protein localises to the cytoplasm. IF-3 binds to the 30S ribosomal subunit and shifts the equilibrium between 70S ribosomes and their 50S and 30S subunits in favor of the free subunits, thus enhancing the availability of 30S subunits on which protein synthesis initiation begins. The polypeptide is Translation initiation factor IF-3 (Prochlorococcus marinus (strain MIT 9211)).